The primary structure comprises 298 residues: H-2 class I histocompatibility antigen, alpha chain (298 aa).

Topologically, residues 1-244 (RYEPRARWIE…EPPSSTKTNT (244 aa)) are extracellular. A glycan (N-linked (GlcNAc...) asparagine) is linked at Asn43. An intrachain disulfide couples Cys58 to Cys121. Asn133 is a glycosylation site (N-linked (GlcNAc...) asparagine). The region spanning 142-230 (PKAHVTHHRR…EGLPEPLTLR (89 aa)) is the Ig-like C1-type domain. Cys160 and Cys216 form a disulfide bridge. Residues 245–265 (VIIAVPVVLGAVVILGAVMAF) form a helical membrane-spanning segment. Over 266–298 (VMKRRRNTGGKGGDYALAPVSQSSDMSLPDCKV) the chain is Cytoplasmic. The tract at residues 277-298 (GGDYALAPVSQSSDMSLPDCKV) is disordered. Phosphoserine occurs at positions 289 and 292.

Belongs to the MHC class I family. Heterodimer of an alpha chain and a beta chain (beta-2-microglobulin).

Its subcellular location is the membrane. In terms of biological role, involved in the presentation of foreign antigens to the immune system. The polypeptide is H-2 class I histocompatibility antigen, alpha chain (H2-D1) (Mus musculus (Mouse)).